Reading from the N-terminus, the 308-residue chain is Follistatin-related protein 1 (308 aa).

A signal peptide spans 1–20; sequence MWKRWLALALALVAVAWVRA. A Follistatin-like domain is found at 30-53; the sequence is ICANVFCGAGRECAVTEKGEPTCL. 5 cysteine pairs are disulfide-bonded: C31-C42, C36-C52, C54-C84, C58-C77, and C66-C98. One can recognise a Kazal-like domain in the interval 48–100; sequence GEPTCLCIEQCKPHKRPVCGSNGKTYLNHCELHRDACLTGSKIQVDYDGHCKE. Residue N144 is glycosylated (N-linked (GlcNAc...) asparagine). The region spanning 144–178 is the EF-hand 1 domain; that stretch reads NYSEILDKYFKNFDNGDSRLDSSEFLKFVEQNETA. A Phosphoserine modification is found at S165. 2 N-linked (GlcNAc...) asparagine glycosylation sites follow: N175 and N180. One can recognise an EF-hand 2 domain in the interval 193 to 228; it reads LRGLCVDALIELSDENADWKLSFQEFLKCLNPSFNP. The 55-residue stretch at 233–287 folds into the VWFC domain; sequence CALEDETYADGAETEVDCNRCVCACGNWVCTAMTCDGKNQKGAQTQTEEEMTRYV.

As to quaternary structure, homodimer. Interacts with SCN10A. Interacts with DIP2A; DIP2A may act as a cell surface receptor for FSTL1. Interacts with BMP4. Interacts with CD14; this interaction promotes TL4-mediated signaling cascade.

Its subcellular location is the secreted. In terms of biological role, secreted glycoprotein that is involved in various physiological processes, such as angiogenesis, regulation of the immune response, cell proliferation and differentiation. Plays a role in the development of the central nervous system, skeletal system, lungs, and ureter. Promotes endothelial cell survival, migration and differentiation into network structures in an AKT-dependent manner. Also promotes survival of cardiac myocytes. Initiates various signaling cascades by activating different receptors on the cell surface such as DIP2A, TLR4 or BMP receptors. The protein is Follistatin-related protein 1 (FSTL1) of Macaca fascicularis (Crab-eating macaque).